We begin with the raw amino-acid sequence, 67 residues long: Conotoxin Cl14c (67 aa).

Residues 1-20 (MNVTVMFLVLLLLTMPLTDG) form the signal peptide. A propeptide spanning residues 21 to 48 (FNIRATNGGELFGPVQRDAGNVLDHGFQ) is cleaved from the precursor.

The protein belongs to the conotoxin L superfamily. In terms of processing, contains 2 disulfide bonds. Expressed by the venom duct.

The protein localises to the secreted. In Californiconus californicus (California cone), this protein is Conotoxin Cl14c.